A 490-amino-acid chain; its full sequence is Protein twist (490 aa).

Disordered stretches follow at residues Gln-48 to Gln-72, Pro-96 to Ser-165, and Gln-244 to Met-264. The span at Gln-54–Gln-68 shows a compositional bias: basic residues. Low complexity-rich tracts occupy residues Ser-102 to Gly-134 and Gln-244 to Gln-263. Phosphoserine occurs at positions 325 and 328. The disordered stretch occupies residues Leu-330–Ser-361. Positions Ala-339–Pro-351 are enriched in basic residues. Residues Asn-362–Leu-413 enclose the bHLH domain.

In terms of assembly, efficient DNA binding requires dimerization with another bHLH protein. Homodimer. Interacts with akirin. In terms of tissue distribution, expressed in embryonic abdomen; a single cell ventrally, pairs of cells laterally and three cells dorsally in each hemisegment. In the thorax, there are patches of cells associated with the imaginal disks. During larval development, cells proliferate and, in the abdomen, they form ventral, lateral and dorsal clusters, which are the precursors of the adult abdominal muscles. In the thorax, they form populations of cells in the imaginal disks that correspond to the adepithelial cells.

The protein localises to the nucleus. Involved in the establishment and dorsoventral patterning of germ layers in the embryo. In Drosophila melanogaster (Fruit fly), this protein is Protein twist (twi).